The chain runs to 1432 residues: uncharacterized protein (1432 aa).

9 disordered regions span residues 1 to 72 (MDTI…NYYN), 208 to 237 (NKIENNNNNNNNKINNENNNEKNKNNNNGQ), 280 to 335 (ERNE…ENNL), 531 to 607 (IVKS…NNSS), 690 to 712 (QNKSPLISPSLSKSNTTTTTTTT), 738 to 801 (NNTL…NGGR), 896 to 950 (QSNN…SPPT), 1044 to 1076 (NINSNSNNNNNNNNNNNNNNNNNNNNYNNNNNN), and 1303 to 1359 (NNNN…NTTP). Low complexity-rich tracts occupy residues 14 to 72 (INNN…NYYN), 208 to 225 (NKIENNNNNNNNKINNEN), and 284 to 300 (LTSPASSLPSLPSLPSS). A compositionally biased stretch (acidic residues) spans 315 to 325 (QEEEEEEEEED). Low complexity-rich tracts occupy residues 536-575 (SSSNLNKINQNNQNNNNNNIINNNNNNNNQNNTTTNNKNK), 583-607 (DNNTVFNNNTTTTNNNNNNNNNNSS), 691-712 (NKSPLISPSLSKSNTTTTTTTT), 744-779 (NMNNNNNNNNNNNNNNNNNNNNNNNNNNNNNNNSNN), and 896-944 (QSNN…SSSN). The segment covering 1311 to 1320 (NGNGNGGING) has biased composition (gly residues). Positions 1321 to 1333 (NNGNNSGSNNKEN) are enriched in low complexity. Residues 1334–1346 (GGTGAGIGGGGGL) show a composition bias toward gly residues. Over residues 1347-1359 (QLPNNNNNNNTTP) the composition is skewed to low complexity.

This is an uncharacterized protein from Dictyostelium discoideum (Social amoeba).